Consider the following 429-residue polypeptide: Adenylosuccinate synthetase (429 aa).

Residues 12 to 18 and 40 to 42 each bind GTP; these read GDEGKGK and GHT. D13 serves as the catalytic Proton acceptor. Mg(2+)-binding residues include D13 and G40. IMP-binding positions include 13 to 16, 38 to 41, T129, R143, Q223, T238, and R302; these read DEGK and NAGH. The active-site Proton donor is H41. Residue 298 to 304 participates in substrate binding; it reads VVTGRKR. GTP contacts are provided by residues R304, 330 to 332, and 412 to 414; these read KLD and STS.

This sequence belongs to the adenylosuccinate synthetase family. As to quaternary structure, homodimer. Requires Mg(2+) as cofactor.

The protein resides in the cytoplasm. It catalyses the reaction IMP + L-aspartate + GTP = N(6)-(1,2-dicarboxyethyl)-AMP + GDP + phosphate + 2 H(+). It participates in purine metabolism; AMP biosynthesis via de novo pathway; AMP from IMP: step 1/2. Functionally, plays an important role in the de novo pathway of purine nucleotide biosynthesis. Catalyzes the first committed step in the biosynthesis of AMP from IMP. The protein is Adenylosuccinate synthetase of Bartonella tribocorum (strain CIP 105476 / IBS 506).